The primary structure comprises 349 residues: MDIKSALSRIVGQLDLTTEEMREVMRQIMTGQCSEAQIGAFLMGMRMKSESIDEIVGAVSVMRELAEKVELQSLDGVVDIVGTGGDGANIFNVSTASSFVLAAAGCPVAKHGNRAVSGKSGSADLLEAAGIYLNLTPTQVARCIDSLGIGFMFAQSHHSAMKHAAGPRRELGLRTLFNMLGPLTNPAGVKHQVVGVFAQTLCRPLAEVLQRLGSKHVLVVHSKDGLDEFSLAAPTFVAELKNDEITEYWVEPEDLGMKSQSLHGLAVESPQASLELIRDALGRRKTENGQKAAEMIVLNAGAALYAADHAMSLKAGVELAHDVLHTGLAWEKLQELGAFTAVFKVENEA.

5-phospho-alpha-D-ribose 1-diphosphate contacts are provided by residues Gly82, 85 to 86 (GD), 92 to 95 (NVST), 110 to 118 (KHGNRAVSG), and Ser122. Gly82 is a binding site for anthranilate. Position 94 (Ser94) interacts with Mg(2+). Asn113 contacts anthranilate. Arg168 contacts anthranilate. Residues Asp227 and Glu228 each contribute to the Mg(2+) site.

The protein belongs to the anthranilate phosphoribosyltransferase family. As to quaternary structure, homodimer. Requires Mg(2+) as cofactor.

It catalyses the reaction N-(5-phospho-beta-D-ribosyl)anthranilate + diphosphate = 5-phospho-alpha-D-ribose 1-diphosphate + anthranilate. Its pathway is amino-acid biosynthesis; L-tryptophan biosynthesis; L-tryptophan from chorismate: step 2/5. Its function is as follows. Catalyzes the transfer of the phosphoribosyl group of 5-phosphorylribose-1-pyrophosphate (PRPP) to anthranilate to yield N-(5'-phosphoribosyl)-anthranilate (PRA). The protein is Anthranilate phosphoribosyltransferase of Pseudomonas putida (strain ATCC 47054 / DSM 6125 / CFBP 8728 / NCIMB 11950 / KT2440).